The chain runs to 200 residues: Histone chaperone asf1a-B (200 aa).

This sequence belongs to the ASF1 family. Interacts with histone H3 (including both histone H3.1 and H3.3) and histone H4.

It is found in the nucleus. Functionally, histone chaperone that facilitates histone deposition and histone exchange and removal during nucleosome assembly and disassembly. The protein is Histone chaperone asf1a-B (asf1ab) of Xenopus laevis (African clawed frog).